Reading from the N-terminus, the 150-residue chain is Transcriptional regulator MraZ (150 aa).

SpoVT-AbrB domains lie at 6–52 and 80–126; these read EFFN…PYQE and AVEC…NRTK.

It belongs to the MraZ family. As to quaternary structure, forms oligomers.

It is found in the cytoplasm. It localises to the nucleoid. The protein is Transcriptional regulator MraZ of Syntrophotalea carbinolica (strain DSM 2380 / NBRC 103641 / GraBd1) (Pelobacter carbinolicus).